Consider the following 233-residue polypeptide: Antiholin-like protein LrgB (233 aa).

A run of 7 helical transmembrane segments spans residues 9–29 (TPYFGILLSVIPFFLATILFE), 34–54 (FFLFAPLFVSMVFGVAFLYLT), 63–83 (IGGDIIYFFLEPATICFAIPL), 97–117 (IIGGIGIGTVVALLIILTFAK), 121–141 (FANDVILSMLPQAATTAIALP), 144–164 (AGIGGIKELTSLAVILNGVII), and 212–232 (IALVLVGVVVVAVVPVFVAIF).

The protein belongs to the CidB/LrgB family. LrgB subfamily.

It localises to the cell membrane. Functionally, inhibits the expression or activity of extracellular murein hydrolases by interacting, possibly with LrgA, with the holin-like proteins CidA and/or CidB. The LrgAB and CidAB proteins may affect the proton motive force of the membrane. May be involved in programmed cell death (PCD), possibly triggering PCD in response to antibiotics and environmental stresses. The sequence is that of Antiholin-like protein LrgB from Staphylococcus aureus (strain Mu3 / ATCC 700698).